Consider the following 547-residue polypeptide: MAAKHVVFGAEARERMLRGVDTLANAVKVTLGPKGRNVVIEKSFGAPRSTKDGVTVAKEIELEDKFENMGAQMLREVASKANDTAGDGTTTATVLAQAIVREGMKRVAAGMNPMDLKRGISKAVAEVVSDLAHHSKKVKTNEEIAQVGTISANGETEIGQMIAEAMAKVGNEGVITVEEAKALETELDVVEGMQFDRGYISPYFITNPDKMIVELEDVLILLHESKLSSLQPLLPILESVVQSQKPLLIIAEDVDGEALATLVVNKLRGGLKIAAVKAPGFGDRRKAMLQDLAVLTGGQVISEDLGIKLENVGMEMLGKAKRVSIDKDNTTIVDGGGKKKEIEARVSQIRKQIDDTSSDYDREKLQERLAKLAGGVAVIKVGGATEVEVKERKDRVDDALNATRAAVEEGIVPGGGVALLRSSKNIDVVGLNDDEKAGIDIVRKALEAPIRQIAENAGVEGSVVVNTILNNKSRSYGFNAQTEEYGDLVAMGVIDPVKVVRSALQNAASIASLLITTEAGIAEAPKKESAGGGGMPGGMGGMGGMDF.

ATP is bound by residues 30–33 (TLGP), Lys51, 87–91 (DGTTT), Gly415, and Asp495. Residues 526–547 (KKESAGGGGMPGGMGGMGGMDF) form a disordered region. The span at 530 to 547 (AGGGGMPGGMGGMGGMDF) shows a compositional bias: gly residues.

It belongs to the chaperonin (HSP60) family. As to quaternary structure, forms a cylinder of 14 subunits composed of two heptameric rings stacked back-to-back. Interacts with the co-chaperonin GroES.

It is found in the cytoplasm. It carries out the reaction ATP + H2O + a folded polypeptide = ADP + phosphate + an unfolded polypeptide.. Functionally, together with its co-chaperonin GroES, plays an essential role in assisting protein folding. The GroEL-GroES system forms a nano-cage that allows encapsulation of the non-native substrate proteins and provides a physical environment optimized to promote and accelerate protein folding. The sequence is that of Chaperonin GroEL from Hyphomonas neptunium (strain ATCC 15444).